A 301-amino-acid chain; its full sequence is Homoserine kinase (301 aa).

89 to 99 (KPGSGLGSSSA) lines the ATP pocket.

This sequence belongs to the GHMP kinase family. Homoserine kinase subfamily.

The protein resides in the cytoplasm. The enzyme catalyses L-homoserine + ATP = O-phospho-L-homoserine + ADP + H(+). It participates in amino-acid biosynthesis; L-threonine biosynthesis; L-threonine from L-aspartate: step 4/5. Catalyzes the ATP-dependent phosphorylation of L-homoserine to L-homoserine phosphate. This is Homoserine kinase from Methanococcus maripaludis (strain C5 / ATCC BAA-1333).